The primary structure comprises 158 residues: Putative 4-hydroxy-4-methyl-2-oxoglutarate aldolase (158 aa).

Substrate is bound by residues 75-78 (GDLI) and Arg-97. Asp-98 contributes to the a divalent metal cation binding site.

It belongs to the class II aldolase/RraA-like family. Homotrimer. It depends on a divalent metal cation as a cofactor.

The catalysed reaction is 4-hydroxy-4-methyl-2-oxoglutarate = 2 pyruvate. It catalyses the reaction oxaloacetate + H(+) = pyruvate + CO2. Catalyzes the aldol cleavage of 4-hydroxy-4-methyl-2-oxoglutarate (HMG) into 2 molecules of pyruvate. Also contains a secondary oxaloacetate (OAA) decarboxylase activity due to the common pyruvate enolate transition state formed following C-C bond cleavage in the retro-aldol and decarboxylation reactions. The polypeptide is Putative 4-hydroxy-4-methyl-2-oxoglutarate aldolase (Saccharopolyspora erythraea (strain ATCC 11635 / DSM 40517 / JCM 4748 / NBRC 13426 / NCIMB 8594 / NRRL 2338)).